An 843-amino-acid chain; its full sequence is General transcription and DNA repair factor IIH helicase/translocase subunit XPB/SSL2 (843 aa).

The disordered stretch occupies residues 1 to 85; the sequence is MTDVEGYQPK…TAADSSMNQM (85 aa). Acidic residues predominate over residues 26 to 41; it reads SDEDSPATDAEIDENY. The segment covering 42 to 56 has biased composition (basic and acidic residues); it reads DDNRETSEGRGERDT. Positions 64–74 are enriched in basic residues; the sequence is KKPRKKTKSSR. Positions 64 to 75 match the Nuclear localization signal motif; it reads KKPRKKTKSSRH. A Helicase ATP-binding domain is found at 373–535; it reads MFGNGRARSG…DLNFLIGPKL (163 aa). 386-393 is an ATP binding site; it reads LPCGAGKT. The DEAH box motif lies at 488–491; the sequence is DEVH. One can recognise a Helicase C-terminal domain in the interval 589–743; sequence QACQFLIQYH…KVITHLHGME (155 aa). Serine 752 is subject to Phosphoserine.

The protein belongs to the helicase family. RAD25/XPB subfamily. Component of the 7-subunit TFIIH core complex composed of XPB/SSL2, XPD/RAD3, SSL1, TFB1, TFB2, TFB4 and TFB5, which is active in NER. The core complex associates with the 3-subunit CTD-kinase module TFIIK composed of CCL1, KIN28 and TFB3 to form the 10-subunit holoenzyme (holo-TFIIH) active in transcription. An additionnal subunit, TFB6, plays a role in the dissociation of the SSL2 helicase from TFIIH after transcription initiation. Interacts directly with TFB6. The cofactor is Mg(2+).

Its subcellular location is the nucleus. The catalysed reaction is Couples ATP hydrolysis with the unwinding of duplex DNA by translocating in the 3'-5' direction.. It carries out the reaction ATP + H2O = ADP + phosphate + H(+). Its function is as follows. ATP-dependent DNA translocase. Component of the general transcription and DNA repair factor IIH (TFIIH) core complex. When complexed to CDK-activating kinase (CAK), involved in RNA transcription by RNA polymerase II. May have 3'-5' helicase activity alone, the TFIIH core however has no 3'-5' helicase activity. Also involved in transcription-coupled nucleotide excision repair (NER) of damaged DNA. In NER, TFIIH acts by opening DNA around the lesion to allow the excision of the damaged oligonucleotide and its replacement by a new DNA fragment. The ATPase activity of XPB/SSL2, but not its helicase activity, is required for DNA opening. In transcription, TFIIH has an essential role in transcription initiation. When the pre-initiation complex (PIC) has been established, TFIIH is required for promoter opening and promoter escape. The ATP-dependent helicase activity of XPB/SSL2 is required for promoter opening and promoter escape. XPB/SSL2 acts as a double-stranded DNA translocase, promoting DNA opening by tracking in a 5'-3' dirction along the nontemplate promoter strand, rotating and inserting DNA into the Pol II active site cleft, leading to DNA unwinding. A dsDNA-stimulated ATPase, dATP and ATP are equally good substrates. May also use this translocase mechanism during DNA repair rather than physically wedging open damaged DNA. The sequence is that of General transcription and DNA repair factor IIH helicase/translocase subunit XPB/SSL2 from Saccharomyces cerevisiae (strain ATCC 204508 / S288c) (Baker's yeast).